We begin with the raw amino-acid sequence, 785 residues long: Ubiquitin carboxyl-terminal hydrolase 1 (785 aa).

2 disordered regions span residues Met1–Asn21 and Thr33–Tyr52. A compositionally biased stretch (polar residues) spans Ser7–Ser16. Phosphoserine occurs at positions 16, 42, and 67. In terms of domain architecture, USP spans Val81–Leu785. Cys90 (nucleophile) is an active-site residue. 2 stretches are compositionally biased toward basic and acidic residues: residues Glu258–Thr275 and Leu286–Arg298. The tract at residues Glu258–Arg336 is disordered. Phosphoserine occurs at positions 313 and 475. His593 (proton acceptor) is an active-site residue. Residues Thr693 to Gly723 form a disordered region. A compositionally biased stretch (basic and acidic residues) spans Gly708–Ser719. Ser768 carries the post-translational modification Phosphoserine.

It belongs to the peptidase C19 family. As to quaternary structure, interacts with FANCD2 and PCNA. Interacts with WDR48. Interacts with ATAD5; the interaction regulates USP1-mediated PCNA deubiquitination. Autocatalytic cleavage of USP1 following UV irradiation inactivates it, leading to an increase in ubiquitinated PCNA, recruitment of POLH and translesion synthesis. In terms of processing, ubiquitinated by the CRL2(KLHDC2) complex following autocatalytic cleavage, leading to its degradation: the CRL2(KLHDC2) complex recognizes the diglycine (Gly-Gly) at the C-terminus.

The protein localises to the nucleus. It catalyses the reaction Thiol-dependent hydrolysis of ester, thioester, amide, peptide and isopeptide bonds formed by the C-terminal Gly of ubiquitin (a 76-residue protein attached to proteins as an intracellular targeting signal).. Negative regulator of DNA damage repair which specifically deubiquitinates monoubiquitinated FANCD2. Also involved in PCNA-mediated translesion synthesis (TLS) by deubiquitinating monoubiquitinated PCNA. Has almost no deubiquitinating activity by itself and requires the interaction with WDR48 to have a high activity. This Homo sapiens (Human) protein is Ubiquitin carboxyl-terminal hydrolase 1 (USP1).